A 258-amino-acid chain; its full sequence is Phosphoadenosine 5'-phosphosulfate reductase (258 aa).

Cysteine 244 functions as the Nucleophile; cysteine thiosulfonate intermediate in the catalytic mechanism.

This sequence belongs to the PAPS reductase family. CysH subfamily.

The protein resides in the cytoplasm. It carries out the reaction [thioredoxin]-disulfide + sulfite + adenosine 3',5'-bisphosphate + 2 H(+) = [thioredoxin]-dithiol + 3'-phosphoadenylyl sulfate. The protein operates within sulfur metabolism; hydrogen sulfide biosynthesis; sulfite from sulfate: step 3/3. Functionally, catalyzes the formation of sulfite from phosphoadenosine 5'-phosphosulfate (PAPS) using thioredoxin as an electron donor. The chain is Phosphoadenosine 5'-phosphosulfate reductase from Vibrio vulnificus (strain CMCP6).